The sequence spans 269 residues: Eukaryotic translation initiation factor 3 subunit G-1 (269 aa).

The RRM domain maps to 188-266 (AAIRISNLSE…LILSVEWSKP (79 aa)).

The protein belongs to the eIF-3 subunit G family. Component of the eukaryotic translation initiation factor 3 (eIF-3) complex. The eIF-3 complex interacts with pix.

It is found in the cytoplasm. In terms of biological role, RNA-binding component of the eukaryotic translation initiation factor 3 (eIF-3) complex, which is involved in protein synthesis of a specialized repertoire of mRNAs and, together with other initiation factors, stimulates binding of mRNA and methionyl-tRNAi to the 40S ribosome. The eIF-3 complex specifically targets and initiates translation of a subset of mRNAs involved in cell proliferation. This subunit can bind 18S rRNA. This Drosophila grimshawi (Hawaiian fruit fly) protein is Eukaryotic translation initiation factor 3 subunit G-1.